A 184-amino-acid polypeptide reads, in one-letter code: MSCRSEHIWIEPITGARKTSNFCWAVILFLGSLGFLLVGTSSYLGRNLISLFPSQEIVFFPQGIVMSFYGIAGLFISSYLWCTISWNVGSGYDRFDRKDGIVCIFRWGFPGKNRRVFLQFLIKDIQSVRIEVKEGIYARRVLYMDIRGQGAIPLTRTDENFTPREMEQKAAELAYFLRVPIEVF.

2 consecutive transmembrane segments (helical) span residues 22-42 and 57-77; these read FCWA…GTSS and IVFF…LFIS.

It belongs to the Ycf4 family.

The protein resides in the plastid. Its subcellular location is the chloroplast thylakoid membrane. Seems to be required for the assembly of the photosystem I complex. The protein is Photosystem I assembly protein Ycf4 of Lactuca sativa (Garden lettuce).